We begin with the raw amino-acid sequence, 335 residues long: Photosystem II assembly lipoprotein Ycf48 (335 aa).

Residues 1-23 (MSRLFSNLFNLLLIAAIGFGLSG) form the signal peptide. The N-palmitoyl cysteine moiety is linked to residue Cys24. Cys24 carries S-diacylglycerol cysteine lipidation.

The protein belongs to the Ycf48 family. Part of early PSII assembly complexes which includes D1 (psbA) and PsbI; not found in mature PSII. Binds to the lumenal side of PSII complexes. Interacts with YidC.

The protein resides in the cellular thylakoid membrane. Functionally, a factor required for optimal assembly of photosystem II (PSII), acting in the early stages of PSII assembly. Also plays a role in replacement of photodamaged D1 (psbA). Assists YidC in synthesis of chlorophyll-binding proteins. This Prochlorococcus marinus (strain MIT 9313) protein is Photosystem II assembly lipoprotein Ycf48.